Here is a 282-residue protein sequence, read N- to C-terminus: Probable porphobilinogen deaminase (282 aa).

Cysteine 233 bears the S-(dipyrrolylmethanemethyl)cysteine mark.

This sequence belongs to the HMBS family. Requires dipyrromethane as cofactor.

It catalyses the reaction 4 porphobilinogen + H2O = hydroxymethylbilane + 4 NH4(+). The protein operates within porphyrin-containing compound metabolism; protoporphyrin-IX biosynthesis; coproporphyrinogen-III from 5-aminolevulinate: step 2/4. In terms of biological role, tetrapolymerization of the monopyrrole PBG into the hydroxymethylbilane pre-uroporphyrinogen in several discrete steps. This chain is Probable porphobilinogen deaminase, found in Picrophilus torridus (strain ATCC 700027 / DSM 9790 / JCM 10055 / NBRC 100828 / KAW 2/3).